Reading from the N-terminus, the 1602-residue chain is Mediator of RNA polymerase II transcription subunit 26 (1602 aa).

The TFIIS N-terminal domain maps to 8-85; that stretch reads QLTSHLSQAL…KMWREMVGIQ (78 aa). Disordered stretches follow at residues 86–108, 238–298, 399–481, 580–617, and 694–736; these read QTAN…PSAH, VTDS…AQNE, EDSI…KGVD, FSNK…SLDS, and SDNG…MDTP. The span at 273-285 shows a compositional bias: basic residues; it reads RPKKFKKDKKHKE. Residues 401–414 are compositionally biased toward polar residues; the sequence is SITNDSSTSCSRLS. Residues 418 to 431 are compositionally biased toward basic and acidic residues; the sequence is VEERRKSDKIDDSI. The span at 467 to 477 shows a compositional bias: basic residues; the sequence is VPKKRGRKKGS. Residues 587-604 are compositionally biased toward polar residues; the sequence is AGNTDSDTITSEPSQDSN. Basic and acidic residues predominate over residues 715–728; that stretch reads KQEEQLPKLERLSD. Residues 792–820 adopt a coiled-coil conformation; the sequence is LDVASVNADTVQNQINSHNQEGETSEEQN. Disordered regions lie at residues 1035–1158 and 1372–1407; these read FEET…EVEN and NTSA…NESD. Residues 1056 to 1070 are compositionally biased toward low complexity; it reads SSSSNSSCSNSSNSS. A compositionally biased stretch (basic and acidic residues) spans 1073-1083; the sequence is KTQDSINEKLR. The span at 1101–1112 shows a compositional bias: basic residues; sequence RKRRGKNRKKRN. A compositionally biased stretch (low complexity) spans 1124–1143; it reads ISLNGTISNLSSSNNSSSSE. The segment covering 1144–1158 has biased composition (acidic residues); that stretch reads SETETGLENENEVEN. Positions 1378 to 1388 are enriched in basic and acidic residues; sequence TVSEDPLKIEE.

The protein belongs to the Mediator complex subunit 26 family. As to quaternary structure, component of the Mediator complex.

It is found in the nucleus. Its function is as follows. Component of the Mediator complex, a coactivator involved in the regulated transcription of nearly all RNA polymerase II-dependent genes. Mediator functions as a bridge to convey information from gene-specific regulatory proteins to the basal RNA polymerase II transcription machinery. Mediator is recruited to promoters by direct interactions with regulatory proteins and serves as a scaffold for the assembly of a functional preinitiation complex with RNA polymerase II and the general transcription factors. This Drosophila pseudoobscura pseudoobscura (Fruit fly) protein is Mediator of RNA polymerase II transcription subunit 26 (MED26).